The sequence spans 318 residues: 2-desacetyl-2-hydroxyethyl bacteriochlorophyllide A dehydrogenase (318 aa).

The protein operates within porphyrin-containing compound metabolism; bacteriochlorophyll biosynthesis (light-independent). Functionally, this protein catalyzes the penultimate step in bacteriochlorophyll a biosynthesis. In Cereibacter sphaeroides (strain ATCC 17023 / DSM 158 / JCM 6121 / CCUG 31486 / LMG 2827 / NBRC 12203 / NCIMB 8253 / ATH 2.4.1.) (Rhodobacter sphaeroides), this protein is 2-desacetyl-2-hydroxyethyl bacteriochlorophyllide A dehydrogenase (bchC).